The primary structure comprises 1061 residues: Transmembrane protease serine 9 (1061 aa).

The Cytoplasmic segment spans residues 3–31 (PAAPDLQPVPEVTKGVPVPTPDSGCCRAA). Residues 32 to 52 (VTTVVAISVASLTLGVLSAFL) traverse the membrane as a helical segment. Over 53–1061 (SAQGVQVEHT…LGWIGQNIRE (1009 aa)) the chain is Extracellular. The 38-residue stretch at 155-192 (HCPGNAFSCQNSQCVSKENPECDDRVDCSDGSDEAQCD) folds into the LDL-receptor class A domain. 4 cysteine pairs are disulfide-bonded: Cys156/Cys168, Cys163/Cys182, Cys176/Cys191, and Cys230/Cys246. One can recognise a Peptidase S1 1 domain in the interval 205 to 438 (IVGGAEAAPG…LRDWILEVTS (234 aa)). Active-site charge relay system residues include His245 and Asp294. Intrachain disulfides connect Cys328–Cys395, Cys360–Cys374, and Cys385–Cys414. Ser389 functions as the Charge relay system in the catalytic mechanism. A disordered region spans residues 443–499 (PVVPTEAPAPITPSTPWPTSPESRVPNTTAKPTVAPTPAPLHPSTAAKPQECGARPA). Pro residues predominate over residues 452–461 (PITPSTPWPT). The segment covering 462–476 (SPESRVPNTTAKPTV) has biased composition (low complexity). An N-linked (GlcNAc...) asparagine glycan is attached at Asn469. In terms of domain architecture, Peptidase S1 2 spans 506 to 738 (IVGGISAVSG…LKDWILKAMS (233 aa)). The cysteines at positions 531 and 547 are disulfide-linked. His546 functions as the Charge relay system in the catalytic mechanism. Asn549 carries an N-linked (GlcNAc...) asparagine glycan. Residue Asp594 is the Charge relay system of the active site. 3 cysteine pairs are disulfide-bonded: Cys628–Cys695, Cys660–Cys674, and Cys685–Cys714. 2 N-linked (GlcNAc...) asparagine glycosylation sites follow: Asn640 and Asn665. Ser689 (charge relay system) is an active-site residue. The segment covering 740-752 (DPSSTAHPHTSST) has biased composition (low complexity). Disordered regions lie at residues 740–771 (DPSSTAHPHTSSTRLIPSQPPTTTAAGLIPEA) and 790–810 (LNTTLSARSTTTRRQTPAPGT). Asn791 is a glycosylation site (N-linked (GlcNAc...) asparagine). Over residues 792-808 (TTLSARSTTTRRQTPAP) the composition is skewed to low complexity. In terms of domain architecture, Peptidase S1 3 spans 830 to 1060 (IVGGSAASLG…VLGWIGQNIR (231 aa)). 4 cysteine pairs are disulfide-bonded: Cys856-Cys872, Cys951-Cys1017, Cys982-Cys996, and Cys1007-Cys1036.

It belongs to the peptidase S1 family. In terms of processing, proteolytically cleaved to generate 3 independent serine protease chains. The cleaved chains may remain attached to the membrane thanks to disulfide bonds. It is unclear whether cleavage always takes place.

The protein resides in the cell membrane. With respect to regulation, inhibited by serine protease inhibitors PMSF and 4-(2-aminoethyl)benzenesulfonyl fluoride, but not by EDTA. Its function is as follows. Serase-1 and serase-2 are serine proteases that hydrolyze the peptides N-t-Boc-Gln-Ala-Arg-AMC and N-t-Boc-Gln-Gly-Arg-AMC. In contrast, N-t-Boc-Ala-Phe-Lys-AMC and N-t-Boc-Ala-Pro-Ala-AMC are not significantly hydrolyzed. This is Transmembrane protease serine 9 (Tmprss9) from Rattus norvegicus (Rat).